We begin with the raw amino-acid sequence, 466 residues long: Histidine--tRNA ligase (466 aa).

The protein belongs to the class-II aminoacyl-tRNA synthetase family. In terms of assembly, homodimer.

The protein localises to the cytoplasm. The catalysed reaction is tRNA(His) + L-histidine + ATP = L-histidyl-tRNA(His) + AMP + diphosphate + H(+). The sequence is that of Histidine--tRNA ligase from Xylella fastidiosa (strain M12).